Consider the following 475-residue polypeptide: Ataxin-10 (475 aa).

Arg10 carries the omega-N-methylarginine modification. Residue Ser12 is modified to Phosphoserine; by AURKB. A Phosphoserine; by PLK1 modification is found at Ser77. Thr82 carries the post-translational modification Phosphothreonine; by PLK1. Ser430 bears the Phosphoserine mark.

Belongs to the ataxin-10 family. Homooligomer. Interacts with GNB2. Interacts with IQCB1. Interacts with OGT. In terms of processing, polyubiquitinated. Post-translationally, phosphorylation at Ser-12 by AURKB promotes the association of ATXN10 with PLK1. Phosphorylation at Ser-77 and Thr-82 by PLK1 may play a role in the regulation of cytokinesis and may stimulate the proteasome-mediated degradation of ATXN10. As to expression, expressed in the central nervous system.

The protein localises to the cytoplasm. It localises to the perinuclear region. Its subcellular location is the midbody. It is found in the cytoskeleton. The protein resides in the cilium basal body. The protein localises to the microtubule organizing center. It localises to the centrosome. Its subcellular location is the centriole. May play a role in the regulation of cytokinesis. May play a role in signaling by stimulating protein glycosylation. Induces neuritogenesis by activating the Ras-MAP kinase pathway and is necessary for the survival of cerebellar neurons. Does not appear to play a major role in ciliogenesis. This chain is Ataxin-10 (ATXN10), found in Homo sapiens (Human).